The primary structure comprises 205 residues: Inosine triphosphate pyrophosphatase (205 aa).

20–25 (TGNAKK) is an ITP binding site. Position 48 (Glu-48) interacts with Mg(2+). Residues Lys-60, 76 to 77 (DT), Lys-93, 152 to 155 (FGWD), Lys-175, and 180 to 181 (HR) each bind ITP.

Belongs to the HAM1 NTPase family. In terms of assembly, homodimer. The cofactor is Mg(2+). It depends on Mn(2+) as a cofactor.

It is found in the cytoplasm. The catalysed reaction is ITP + H2O = IMP + diphosphate + H(+). It carries out the reaction dITP + H2O = dIMP + diphosphate + H(+). It catalyses the reaction XTP + H2O = XMP + diphosphate + H(+). In terms of biological role, pyrophosphatase that hydrolyzes non-canonical purine nucleotides such as inosine triphosphate (ITP), deoxyinosine triphosphate (dITP) or xanthosine 5'-triphosphate (XTP) to their respective monophosphate derivatives. The enzyme does not distinguish between the deoxy- and ribose forms. Probably excludes non-canonical purines from RNA and DNA precursor pools, thus preventing their incorporation into RNA and DNA and avoiding chromosomal lesions. This chain is Inosine triphosphate pyrophosphatase, found in Oryza sativa subsp. japonica (Rice).